Reading from the N-terminus, the 168-residue chain is Cell division inhibitor SulA (168 aa).

The segment at 105–111 is ftsZ binding; the sequence is ALLTGNY. The lon protease binding stretch occupies residues 161 to 168; it reads KIHSTLYH.

It belongs to the SulA family. In terms of assembly, interacts with FtsZ. In terms of processing, is rapidly cleaved and degraded by the Lon protease once DNA damage is repaired.

Component of the SOS system and an inhibitor of cell division. Accumulation of SulA causes rapid cessation of cell division and the appearance of long, non-septate filaments. In the presence of GTP, binds a polymerization-competent form of FtsZ in a 1:1 ratio, thus inhibiting FtsZ polymerization and therefore preventing it from participating in the assembly of the Z ring. This mechanism prevents the premature segregation of damaged DNA to daughter cells during cell division. The sequence is that of Cell division inhibitor SulA from Pectobacterium carotovorum subsp. carotovorum (strain PC1).